The following is a 357-amino-acid chain: sn-glycerol-3-phosphate import ATP-binding protein UgpC (357 aa).

One can recognise an ABC transporter domain in the interval 4-235; the sequence is LKLQAVTKSY…PASLFVASFI (232 aa). 37–44 is an ATP binding site; the sequence is GPSGCGKS.

This sequence belongs to the ABC transporter superfamily. sn-glycerol-3-phosphate importer (TC 3.A.1.1.3) family. In terms of assembly, the complex is composed of two ATP-binding proteins (UgpC), two transmembrane proteins (UgpA and UgpE) and a solute-binding protein (UgpB).

The protein localises to the cell inner membrane. The catalysed reaction is sn-glycerol 3-phosphate(out) + ATP + H2O = sn-glycerol 3-phosphate(in) + ADP + phosphate + H(+). Functionally, part of the ABC transporter complex UgpBAEC involved in sn-glycerol-3-phosphate (G3P) import. Responsible for energy coupling to the transport system. This chain is sn-glycerol-3-phosphate import ATP-binding protein UgpC, found in Yersinia pseudotuberculosis serotype I (strain IP32953).